We begin with the raw amino-acid sequence, 267 residues long: Integral membrane protein 2C (267 aa).

Thr-37 bears the Phosphothreonine mark. The chain crosses the membrane as a helical; Signal-anchor for type II membrane protein span at residues 55–75 (VGGVCYLSMGMVVLLMGLVFA). The BRICHOS domain maps to 136-230 (FGGGDPADII…LCNGKDTYRL (95 aa)). Cys-163 and Cys-222 form a disulfide bridge. Asn-169 carries an N-linked (GlcNAc...) asparagine glycan.

The protein belongs to the ITM2 family. In terms of assembly, interacts with BACE1. Interacts with APP. Interacts with STMN2. Type I membrane-bound, as well as soluble, furin has a pre-eminent role in ITM2C proteolytic processing. PCSK7 and PCSK5 may also be involved although to a lesser extent. The soluble form of PCSK7 is incapable of processing ITM2C. Fails to undergo shedding by ADAM10 and intramembrane cleavage by SPPL2B.

The protein resides in the lysosome membrane. Its subcellular location is the cell membrane. Its function is as follows. Negative regulator of amyloid-beta peptide production. May inhibit the processing of APP by blocking its access to alpha- and beta-secretase. Binding to the beta-secretase-cleaved APP C-terminal fragment is negligible, suggesting that ITM2C is a poor gamma-secretase cleavage inhibitor. May play a role in TNF-induced cell death and neuronal differentiation. The polypeptide is Integral membrane protein 2C (ITM2C) (Macaca fascicularis (Crab-eating macaque)).